Reading from the N-terminus, the 140-residue chain is Fluoride-specific ion channel FluC 2 (140 aa).

4 consecutive transmembrane segments (helical) span residues 7 to 27 (VPPLDPAILLAISLGGGLGAL), 45 to 65 (WATFVVNVTGCFAIGVLMVLV), 77 to 97 (PFAGVGLLGGFTTFSTYGLEI), and 106 to 126 (VLEALGYLAGTVLAALAGVVL). Na(+)-binding residues include Gly85 and Thr88.

The protein belongs to the fluoride channel Fluc/FEX (TC 1.A.43) family.

It localises to the cell membrane. It carries out the reaction fluoride(in) = fluoride(out). Na(+) is not transported, but it plays an essential structural role and its presence is essential for fluoride channel function. Fluoride-specific ion channel. Important for reducing fluoride concentration in the cell, thus reducing its toxicity. The sequence is that of Fluoride-specific ion channel FluC 2 from Nocardia farcinica (strain IFM 10152).